The primary structure comprises 302 residues: Sulfate adenylyltransferase subunit 2 (302 aa).

The disordered stretch occupies residues 280 to 302 (RQGRLIDSDQSASMEQKKRQGYF).

The protein belongs to the PAPS reductase family. CysD subfamily. Heterodimer composed of CysD, the smaller subunit, and CysN.

It carries out the reaction sulfate + ATP + H(+) = adenosine 5'-phosphosulfate + diphosphate. Its pathway is sulfur metabolism; hydrogen sulfide biosynthesis; sulfite from sulfate: step 1/3. In terms of biological role, with CysN forms the ATP sulfurylase (ATPS) that catalyzes the adenylation of sulfate producing adenosine 5'-phosphosulfate (APS) and diphosphate, the first enzymatic step in sulfur assimilation pathway. APS synthesis involves the formation of a high-energy phosphoric-sulfuric acid anhydride bond driven by GTP hydrolysis by CysN coupled to ATP hydrolysis by CysD. The polypeptide is Sulfate adenylyltransferase subunit 2 (Shewanella sp. (strain ANA-3)).